Consider the following 943-residue polypeptide: MTQRSIAGPICNLKFVTLLVALSSELPFLGAGVQLQDNGYNGLLIAINPQVPENQNLISNIKEMITEASFYLFNATKRRVFFRNIKILIPATWKANNNSKIKQESYEKANVIVTDWYGAHGDDPYTLQYRGCGKEGKYIHFTPNFLLNDNLTAGYGSRGRVFVHEWAHLRWGVFDEYNNDKPFYINGQNQIKVTRCSSDITGIFVCEKGPCPQENCIISKLFKEGCTFIYNSTQNATASIMFMQSLSSVVEFCNASTHNQEAPNLQNQMCSLRSAWDVITDSADFHHSFPMNGTELPPPPTFSLVQAGDKVVCLVLDVSSKMAEADRLLQLQQAAEFYLMQIVEIHTFVGIASFDSKGEIRAQLHQINSNDDRKLLVSYLPTTVSAKTDISICSGLKKGFEVVEKLNGKAYGSVMILVTSGDDKLLGNCLPTVLSSGSTIHSIALGSSAAPNLEELSRLTGGLKFFVPDISNSNSMIDAFSRISSGTGDIFQQHIQLESTGENVKPHHQLKNTVTVDNTVGNDTMFLVTWQASGPPEIILFDPDGRKYYTNNFITNLTFRTASLWIPGTAKPGHWTYTLNNTHHSLQALKVTVTSRASNSAVPPATVEAFVERDSLHFPHPVMIYANVKQGFYPILNATVTATVEPETGDPVTLRLLDDGAGADVIKNDGIYSRYFFSFAANGRYSLKVHVNHSPSISTPAHSIPGSHAMYVPGYTANGNIQMNAPRKSVGRNEEERKWGFSRVSSGGSFSVLGVPAGPHPDVFPPCKIIDLEAVKVEEELTLSWTAPGEDFDQGQATSYEIRMSKSLQNIQDDFNNAILVNTSKRNPQQAGIREIFTFSPQISTNGPEHQPNGETHESHRIYVAIRAMDRNSLQSAVSNIAQAPLFIPPNSDPVPARDYLILKGVLTAMGLIGIICLIIVVTHHTLSRKKRADKKENGTKLL.

A signal peptide spans 1–31; it reads MTQRSIAGPICNLKFVTLLVALSSELPFLGA. Residues 32–901 lie on the Extracellular side of the membrane; sequence GVQLQDNGYN…SDPVPARDYL (870 aa). A metalloprotease domain region spans residues 54-205; sequence NQNLISNIKE…CSSDITGIFV (152 aa). Residues Asn74 and Asn150 are each glycosylated (N-linked (GlcNAc...) asparagine). His164 lines the Zn(2+) pocket. The active site involves Glu165. Residues His168 and Asp175 each contribute to the Zn(2+) site. Residue Asn231 is glycosylated (N-linked (GlcNAc...) asparagine). Residues 311–483 form the VWFA domain; sequence VVCLVLDVSS…NSMIDAFSRI (173 aa). 2 N-linked (GlcNAc...) asparagine glycosylation sites follow: Asn522 and Asn822. A helical membrane pass occupies residues 902–922; it reads ILKGVLTAMGLIGIICLIIVV. Residues 923-943 lie on the Cytoplasmic side of the membrane; sequence THHTLSRKKRADKKENGTKLL.

This sequence belongs to the CLCR family. In terms of processing, the 141 kDa mature form is autoproteolytically cleaved by the metalloprotease domain, producing a 109 kDa form and a 35 kDa form. The cleavage is necessary for calcium-activated chloride channel (CaCC) activation activity. N-glycosylated. Expressed in cornea, skin, vagina, esophagus, and larynx (at protein level). Expressed in trachea and mammary gland. Weakly expressed in testis and kidney. Highly expressed in corneal epithelium, colon and trachea. Moderately expressed in brain, urogenital organs, bladder, uterus and prostate. Highly expressed in tissues containing stratified epithelium including cornea, esophagus, larynx, skin and vagina than those tissues which contain only epithelial monolayers. Expressed in normal breast epithelium but not in breast cancer. Highly expressed during epithelial stratification. Expressed in endothelial cells of lung. Expressed selectively in endothelia of small pulmonary arteries, arterioles, and subpleural and interlobular venules.

It localises to the cell membrane. It is found in the basal cell membrane. Its subcellular location is the cell junction. The protein localises to the secreted. Functionally, plays a role in modulating chloride current across the plasma membrane in a calcium-dependent manner, and cell adhesion. Involved in basal cell adhesion and/or stratification of squamous epithelia. May act as a tumor suppressor in breast and colorectal cancer. Plays a key role for cell adhesion in the beginning stages of lung metastasis via the binding to ITGB4. This Homo sapiens (Human) protein is Calcium-activated chloride channel regulator 2 (CLCA2).